A 346-amino-acid polypeptide reads, in one-letter code: Retinal homeobox protein Rx (346 aa).

The short motif at 33-40 (HSIEAILG) is the Octapeptide motif element. Disordered stretches follow at residues 46 to 145 (GILG…TFTT) and 194 to 318 (QEKL…LDEA). Residues 55 to 67 (RGARGAKERDRRL) show a composition bias toward basic and acidic residues. The span at 83 to 92 (PSPPPAPAPA) shows a compositional bias: pro residues. Residues 136-195 (HRRNRTTFTTYQLHELERAFEKSHYPDVYSREELAGKVNLPEVRVQVWFQNRRAKWRRQE) constitute a DNA-binding region (homeobox). Residues 207–225 (SPLLSFSRSPPSATLSPLG) show a composition bias toward low complexity. Residues 226-236 (AGPGSGGGPAG) are compositionally biased toward gly residues. Positions 237–246 (GALPLESWLG) are enriched in low complexity. Over residues 274–304 (YTPPPPPPPFLNSPPLGPGLQPLAPPPPSYP) the composition is skewed to pro residues. Positions 323–336 (SSIAALRLKAKEHI) match the OAR motif. The short motif at 329-333 (RLKAK) is the Nuclear localization signal element.

Belongs to the paired homeobox family. Bicoid subfamily. Expressed in the developing eye and weakly expressed in the adult retina.

The protein resides in the nucleus. Plays a critical role in eye formation by regulating the initial specification of retinal cells and/or their subsequent proliferation. Binds to the photoreceptor conserved element-I (PCE-1/Ret 1) in the photoreceptor cell-specific arrestin promoter. The polypeptide is Retinal homeobox protein Rx (RAX) (Homo sapiens (Human)).